The chain runs to 365 residues: DNA replication and repair protein RecF (365 aa).

30–37 (GQNGSGKT) serves as a coordination point for ATP.

Belongs to the RecF family.

The protein localises to the cytoplasm. The RecF protein is involved in DNA metabolism; it is required for DNA replication and normal SOS inducibility. RecF binds preferentially to single-stranded, linear DNA. It also seems to bind ATP. In Shewanella halifaxensis (strain HAW-EB4), this protein is DNA replication and repair protein RecF.